The sequence spans 1935 residues: Rho GTPase-activating protein 21 (1935 aa).

Residues 1–46 (MATRRATVPEQQQQQPSSPGSEISKNKDGQEQSEMVSPTEEEGFCW) form a disordered region. The PDZ domain maps to 78-163 (HTTVKDEENG…TLELSVMPKD (86 aa)). Disordered regions lie at residues 212-237 (VEVP…TTQP), 339-373 (PPSY…PGSH), 413-456 (QNTT…QERL), 673-718 (TSTS…DSNS), and 862-919 (NSKT…DVFS). Composition is skewed to polar residues over residues 217-237 (SGTS…TTQP), 348-373 (SMFS…PGSH), and 413-429 (QNTT…SSGQ). 2 stretches are compositionally biased toward low complexity: residues 441–451 (PQSVQMRQRSV) and 673–685 (TSTS…PAHT). A compositionally biased stretch (polar residues) spans 708-718 (SPEANAGDSNS). Over residues 863–884 (SKTERSKSCDEGLDDYKDEGKL) the composition is skewed to basic and acidic residues. Residues 920–1033 (DSNKEGFLYF…WIKAIQENGN (114 aa)) enclose the PH domain. A disordered region spans residues 1056-1126 (TMMSSSSNKS…KGSWRRIMKK (71 aa)). Positions 1059 to 1072 (SSSSNKSEQSPKPS) are enriched in low complexity. The span at 1097–1119 (PKQESERRLFSKDDISPPKDKGS) shows a compositional bias: basic and acidic residues. One can recognise a Rho-GAP domain in the interval 1140–1332 (VRLDDCPPAH…TLIQQHDWFF (193 aa)). Disordered stretches follow at residues 1341–1393 (ITAV…GSGK), 1411–1431 (RKRK…ELDN), 1488–1510 (SEAT…RLPP), 1525–1548 (SMSD…KPKV), 1637–1665 (HRSK…SITP), 1688–1733 (SIRQ…EPEE), and 1838–1925 (SELS…SGTQ). Residues 1345–1355 (QEESTVESQPV) are compositionally biased toward polar residues. A compositionally biased stretch (low complexity) spans 1376–1393 (SDSASDSAKSKGSWGSGK). 2 stretches are compositionally biased toward polar residues: residues 1525-1543 (SMSD…SAQR) and 1646-1662 (RNVQ…TEGS). The span at 1691–1705 (QKTDSECSAESKNEE) shows a compositional bias: basic and acidic residues. 2 stretches are compositionally biased toward polar residues: residues 1872–1889 (QVST…SQGT) and 1898–1911 (NGDS…NNFS).

Its subcellular location is the golgi apparatus membrane. The protein resides in the cell junction. It localises to the cytoplasmic vesicle membrane. The protein localises to the cytoplasm. It is found in the cytoskeleton. GTPase-activating protein (GAP) for rhoa and cdc42. The polypeptide is Rho GTPase-activating protein 21 (arhgap21) (Xenopus tropicalis (Western clawed frog)).